Reading from the N-terminus, the 336-residue chain is Holliday junction branch migration complex subunit RuvB (336 aa).

Residues 2–186 form a large ATPase domain (RuvB-L) region; that stretch reads QDQEEERMIT…FGVICKLELY (185 aa). ATP is bound by residues Leu-25, Arg-26, Gly-67, Lys-70, Thr-71, Thr-72, 133-135, Arg-176, Tyr-186, and Arg-223; that span reads EDF. Thr-71 serves as a coordination point for Mg(2+). The tract at residues 187 to 257 is small ATPAse domain (RuvB-S); the sequence is NNKQLTAIVK…VAEEALILLE (71 aa). Residues 260-336 form a head domain (RuvB-H) region; sequence SLGLDNTDKK…YEHFNIPSAE (77 aa). DNA-binding residues include Arg-296, Arg-315, and Arg-320.

This sequence belongs to the RuvB family. In terms of assembly, homohexamer. Forms an RuvA(8)-RuvB(12)-Holliday junction (HJ) complex. HJ DNA is sandwiched between 2 RuvA tetramers; dsDNA enters through RuvA and exits via RuvB. An RuvB hexamer assembles on each DNA strand where it exits the tetramer. Each RuvB hexamer is contacted by two RuvA subunits (via domain III) on 2 adjacent RuvB subunits; this complex drives branch migration. In the full resolvosome a probable DNA-RuvA(4)-RuvB(12)-RuvC(2) complex forms which resolves the HJ.

It localises to the cytoplasm. The catalysed reaction is ATP + H2O = ADP + phosphate + H(+). In terms of biological role, the RuvA-RuvB-RuvC complex processes Holliday junction (HJ) DNA during genetic recombination and DNA repair, while the RuvA-RuvB complex plays an important role in the rescue of blocked DNA replication forks via replication fork reversal (RFR). RuvA specifically binds to HJ cruciform DNA, conferring on it an open structure. The RuvB hexamer acts as an ATP-dependent pump, pulling dsDNA into and through the RuvAB complex. RuvB forms 2 homohexamers on either side of HJ DNA bound by 1 or 2 RuvA tetramers; 4 subunits per hexamer contact DNA at a time. Coordinated motions by a converter formed by DNA-disengaged RuvB subunits stimulates ATP hydrolysis and nucleotide exchange. Immobilization of the converter enables RuvB to convert the ATP-contained energy into a lever motion, pulling 2 nucleotides of DNA out of the RuvA tetramer per ATP hydrolyzed, thus driving DNA branch migration. The RuvB motors rotate together with the DNA substrate, which together with the progressing nucleotide cycle form the mechanistic basis for DNA recombination by continuous HJ branch migration. Branch migration allows RuvC to scan DNA until it finds its consensus sequence, where it cleaves and resolves cruciform DNA. The chain is Holliday junction branch migration complex subunit RuvB from Alkaliphilus metalliredigens (strain QYMF).